We begin with the raw amino-acid sequence, 494 residues long: Alpha-amylase-related protein (494 aa).

The first 20 residues, 1–20, serve as a signal peptide directing secretion; the sequence is MIKFALALTLCLAGASLSLA. Glutamine 21 carries the pyrrolidone carboxylic acid modification. A disulfide bridge links cysteine 48 with cysteine 104. Residues asparagine 118, glutamine 169, and aspartate 178 each contribute to the Ca(2+) site. Cysteine 157 and cysteine 171 are disulfide-bonded. Arginine 206 is a binding site for chloride. Residue aspartate 208 is the Nucleophile of the active site. Residue histidine 212 participates in Ca(2+) binding. The active-site Proton donor is the glutamate 245. Chloride-binding residues include asparagine 308 and arginine 343. Disulfide bonds link cysteine 376–cysteine 382, cysteine 418–cysteine 441, and cysteine 448–cysteine 460.

The protein belongs to the glycosyl hydrolase 13 family. In terms of assembly, monomer. Ca(2+) serves as cofactor. It depends on chloride as a cofactor.

The protein resides in the secreted. It catalyses the reaction Endohydrolysis of (1-&gt;4)-alpha-D-glucosidic linkages in polysaccharides containing three or more (1-&gt;4)-alpha-linked D-glucose units.. In Drosophila auraria (Fruit fly), this protein is Alpha-amylase-related protein (Amyrel).